Reading from the N-terminus, the 96-residue chain is Protein S100-A10 (96 aa).

The tract at residues Asp-62–Ser-73 is ancestral calcium site.

Belongs to the S-100 family. In terms of assembly, tetramer of 2 light chains (p10) and 2 heavy chains (annexin II).

Because p10 induces the dimerization of annexin II (p36), it may function as a regulator of protein phosphorylation in that the p36 monomer is the preferred target (in vitro) of tyrosine-specific kinase. The sequence is that of Protein S100-A10 (s100a10) from Xenopus laevis (African clawed frog).